An 85-amino-acid chain; its full sequence is Coiled-coil-helix-coiled-coil-helix domain-containing protein 7 (85 aa).

Residues 13–55 (SNPCLEETDASTKCMDDNRYEKDLCTPYFVKYKNCRKFWNGIM) form the CHCH domain. Short sequence motifs (cx9C motif) lie at residues 16–26 (CLEETDASTKC) and 37–47 (CTPYFVKYKNC). Cystine bridges form between Cys16–Cys47 and Cys26–Cys37.

This sequence belongs to the CHCHD7 family.

The protein resides in the mitochondrion intermembrane space. In Xenopus tropicalis (Western clawed frog), this protein is Coiled-coil-helix-coiled-coil-helix domain-containing protein 7 (chchd7).